Here is a 121-residue protein sequence, read N- to C-terminus: Small ribosomal subunit protein uS13 (121 aa).

The disordered stretch occupies residues 93–121; it reads RGLPMRGQRTRTNARTRKGPRKGAAALKK.

It belongs to the universal ribosomal protein uS13 family. In terms of assembly, part of the 30S ribosomal subunit. Forms a loose heterodimer with protein S19. Forms two bridges to the 50S subunit in the 70S ribosome.

Located at the top of the head of the 30S subunit, it contacts several helices of the 16S rRNA. In the 70S ribosome it contacts the 23S rRNA (bridge B1a) and protein L5 of the 50S subunit (bridge B1b), connecting the 2 subunits; these bridges are implicated in subunit movement. Contacts the tRNAs in the A and P-sites. This chain is Small ribosomal subunit protein uS13, found in Acidovorax ebreus (strain TPSY) (Diaphorobacter sp. (strain TPSY)).